Here is a 765-residue protein sequence, read N- to C-terminus: Eukaryotic translation initiation factor 3 subunit B (765 aa).

The segment at 1–136 (MKNFLPRTLK…LFVECGSMND (136 aa)) is sufficient for interaction with HCR1 and TIF32. The tract at residues 28–261 (RNTQLKRSKI…GVTAWGGPNF (234 aa)) is sufficient for interaction with PIC8. Residue Ser-61 is modified to Phosphoserine. Residue Tyr-67 is modified to Phosphotyrosine. One can recognise an RRM domain in the interval 77–162 (QYIVVNGAPV…HRLFLYTMKD (86 aa)). Ser-671 bears the Phosphoserine mark.

This sequence belongs to the eIF-3 subunit B family. As to quaternary structure, component of the eukaryotic translation initiation factor 3 (eIF-3) complex.

It localises to the cytoplasm. RNA-binding component of the eukaryotic translation initiation factor 3 (eIF-3) complex, which is involved in protein synthesis of a specialized repertoire of mRNAs and, together with other initiation factors, stimulates binding of mRNA and methionyl-tRNAi to the 40S ribosome. The eIF-3 complex specifically targets and initiates translation of a subset of mRNAs involved in cell proliferation. The protein is Eukaryotic translation initiation factor 3 subunit B of Saccharomyces cerevisiae (strain YJM789) (Baker's yeast).